We begin with the raw amino-acid sequence, 250 residues long: uncharacterized protein (250 aa).

Residues 165-208 (HLNLETANTKATEYQKNYQEELKQRQELRQKLLQERTQKMLEAL) are a coiled coil. Positions 201 to 233 (TQKMLEALHQEETPEQDARDTAKKKTDQEEHTM) are enriched in basic and acidic residues. The segment at 201–250 (TQKMLEALHQEETPEQDARDTAKKKTDQEEHTMRKANAPKTKASGEAPTP) is disordered.

This is an uncharacterized protein from Treponema pallidum (strain Nichols).